Consider the following 71-residue polypeptide: Beta-defensin 7 (71 aa).

An N-terminal signal peptide occupies residues 1-22 (MRIHYVLFAFLLVLLSPFAAFS). Glutamine 23 is subject to Pyrrolidone carboxylic acid. Positions 23-25 (QDI) are excised as a propeptide. 3 cysteine pairs are disulfide-bonded: cysteine 31/cysteine 58, cysteine 38/cysteine 52, and cysteine 42/cysteine 59.

The protein belongs to the beta-defensin family. LAP/TAP subfamily.

The protein resides in the secreted. Functionally, has bactericidal activity. This is Beta-defensin 7 (Defb7) from Mus musculus (Mouse).